The chain runs to 149 residues: Probable glycine-rich RNA-binding protein 1 (149 aa).

Residues 8–83 enclose the RRM domain; that stretch reads YRCFVGGLAW…LDGRNITAQA (76 aa). Positions 80 to 149 are disordered; the sequence is TAQARGSGTR…GRSEGGSWRN (70 aa). Gly residues-rich tracts occupy residues 87–101, 110–123, and 131–143; these read GTRG…SGGY, YNRG…GGYG, and YGDG…GRSE.

This sequence belongs to the GR-RBP family.

Functionally, possibly has a role in RNA transcription or processing during stress. In Arabidopsis thaliana (Mouse-ear cress), this protein is Probable glycine-rich RNA-binding protein 1 (RBG1).